The chain runs to 128 residues: Large ribosomal subunit protein bL17 (128 aa).

It belongs to the bacterial ribosomal protein bL17 family. Part of the 50S ribosomal subunit. Contacts protein L32.

This Tolumonas auensis (strain DSM 9187 / NBRC 110442 / TA 4) protein is Large ribosomal subunit protein bL17.